The sequence spans 694 residues: Elongation factor G 2 (694 aa).

The tr-type G domain maps to 5–280; sequence SKYRNIGIFA…AVVDYLPSPT (276 aa). GTP is bound by residues 14 to 21, 78 to 82, and 132 to 135; these read AHVDAGKT, DTPGH, and NKLD.

The protein belongs to the TRAFAC class translation factor GTPase superfamily. Classic translation factor GTPase family. EF-G/EF-2 subfamily.

Its subcellular location is the cytoplasm. Catalyzes the GTP-dependent ribosomal translocation step during translation elongation. During this step, the ribosome changes from the pre-translocational (PRE) to the post-translocational (POST) state as the newly formed A-site-bound peptidyl-tRNA and P-site-bound deacylated tRNA move to the P and E sites, respectively. Catalyzes the coordinated movement of the two tRNA molecules, the mRNA and conformational changes in the ribosome. This Pseudoalteromonas translucida (strain TAC 125) protein is Elongation factor G 2.